Here is a 444-residue protein sequence, read N- to C-terminus: N-succinylarginine dihydrolase (444 aa).

Residues 19-28 (AGLSFGNVAS), asparagine 110, and 137-138 (HR) contribute to the substrate site. The active site involves glutamate 174. Arginine 214 is a binding site for substrate. The active site involves histidine 250. Substrate contacts are provided by aspartate 252 and asparagine 362. The active-site Nucleophile is the cysteine 368.

It belongs to the succinylarginine dihydrolase family. In terms of assembly, homodimer.

The catalysed reaction is N(2)-succinyl-L-arginine + 2 H2O + 2 H(+) = N(2)-succinyl-L-ornithine + 2 NH4(+) + CO2. Its pathway is amino-acid degradation; L-arginine degradation via AST pathway; L-glutamate and succinate from L-arginine: step 2/5. Catalyzes the hydrolysis of N(2)-succinylarginine into N(2)-succinylornithine, ammonia and CO(2). The polypeptide is N-succinylarginine dihydrolase (Shewanella baltica (strain OS155 / ATCC BAA-1091)).